Consider the following 102-residue polypeptide: Spexin prohormone 1 (102 aa).

Residues 1 to 26 (MKDLRTLAAYALALLLLATFVSHSWS) form the signal peptide. A propeptide spanning residues 27–35 (APKGSFQRR) is cleaved from the precursor. Gln49 carries the post-translational modification Glutamine amide. Positions 50–102 (GRRFVSEDRNEGDLYDTIRLESRSQNTENLSISKAAAFLLNILQQARDEDEPY) are excised as a propeptide.

Belongs to the spexin family. As to expression, mainly expressed in the brain and ovary. Detected bilaterally in the adult brainstem. Expressed in neurons in the dorsal habenula (dHb). In the dHb some neurons project into the interpeduncular nucleus (IPN) where expression often overlaps with galr2a and galr2b. Weakly expressed in the liver, intestine, kidney, heart and gill.

Its subcellular location is the secreted. It is found in the extracellular space. The protein localises to the cytoplasmic vesicle. It localises to the secretory vesicle. Its function is as follows. Plays a role in the regulation of food intake and energy metabolism. May also be involved in suppressing the anxiety response by promoting the expression of serotonin-related genes such as fev, tph2 and slc6a4a. Acts as a ligand for galanin receptors galr2a and galr2b. Brain administration of the peptide inhibits food consumption and elevates levels of glucose, triacylglycerol and cholesterol in the serum. Likely to control food intake by regulating appetite related genes which includes the negative regulation of the orexigenic factor agrp. By controlling food intake it may act as a satiety factor in energy metabolism. The chain is Spexin prohormone 1 (spx) from Danio rerio (Zebrafish).